The sequence spans 267 residues: 5'-nucleotidase SurE (267 aa).

Aspartate 9, aspartate 10, serine 41, and asparagine 95 together coordinate a divalent metal cation.

Belongs to the SurE nucleotidase family. A divalent metal cation is required as a cofactor.

It is found in the cytoplasm. The catalysed reaction is a ribonucleoside 5'-phosphate + H2O = a ribonucleoside + phosphate. In terms of biological role, nucleotidase that shows phosphatase activity on nucleoside 5'-monophosphates. The sequence is that of 5'-nucleotidase SurE from Aeropyrum pernix (strain ATCC 700893 / DSM 11879 / JCM 9820 / NBRC 100138 / K1).